The sequence spans 518 residues: Gypsy retrotransposon integrase-like protein 1 (518 aa).

The region spanning 135–293 (VVGNPWSVVT…PYFQMFNRNP (159 aa)) is the Integrase catalytic domain. A disordered region spans residues 326-348 (NQTPAAGQMESSTSEELSKSKVA). Residue Ser-498 is modified to Phosphoserine.

This Rattus norvegicus (Rat) protein is Gypsy retrotransposon integrase-like protein 1 (GIN1).